The sequence spans 257 residues: Probable amino-acid ABC transporter ATP-binding protein y4tH (257 aa).

In terms of domain architecture, ABC transporter spans I6–L251. G38 to S45 serves as a coordination point for ATP.

Belongs to the ABC transporter superfamily.

The protein resides in the cell inner membrane. Probably part of a binding-protein-dependent transport system y4tEFGH for an amino acid. Probably responsible for energy coupling to the transport system. This Sinorhizobium fredii (strain NBRC 101917 / NGR234) protein is Probable amino-acid ABC transporter ATP-binding protein y4tH.